A 206-amino-acid polypeptide reads, in one-letter code: Small ribosomal subunit protein uS4 (206 aa).

The segment at 23-47 (AKSPLNRREYGPGQHGQRRKGKLSD) is disordered. Residues 94-157 (RRLDAVIYRA…RQLAIVLESV (64 aa)) form the S4 RNA-binding domain.

This sequence belongs to the universal ribosomal protein uS4 family. In terms of assembly, part of the 30S ribosomal subunit. Contacts protein S5. The interaction surface between S4 and S5 is involved in control of translational fidelity.

In terms of biological role, one of the primary rRNA binding proteins, it binds directly to 16S rRNA where it nucleates assembly of the body of the 30S subunit. With S5 and S12 plays an important role in translational accuracy. The sequence is that of Small ribosomal subunit protein uS4 from Paracoccus denitrificans (strain Pd 1222).